An 84-amino-acid chain; its full sequence is Putative movement protein (84 aa).

Residues 15-35 (ALHGILVAFIAVLCLIGCLWA) traverse the membrane as a helical segment.

In terms of assembly, interacts with the capsid protein (CP). Part of a MP-CP-viral DNA complex.

It localises to the host membrane. Involved in the viral transport within, and between cells. This Miscanthus streak virus (isolate 91) (MiSV) protein is Putative movement protein.